The primary structure comprises 206 residues: Small ribosomal subunit protein uS3 (206 aa).

A KH type-2 domain is found at 39–107 (IRSYINESFK…SVEVNVVGIK (69 aa)).

Belongs to the universal ribosomal protein uS3 family. Part of the 30S ribosomal subunit. Forms a tight complex with proteins S10 and S14.

Functionally, binds the lower part of the 30S subunit head. Binds mRNA in the 70S ribosome, positioning it for translation. This chain is Small ribosomal subunit protein uS3, found in Wolbachia sp. subsp. Brugia malayi (strain TRS).